Consider the following 1723-residue polypeptide: Probable outer membrane protein pmp20 (1723 aa).

A signal peptide spans 1–21 (MKWLPATAVFAAVLPALTAFG). Disordered stretches follow at residues 78-100 (VTPD…SGAT) and 139-161 (LSSS…SASA). Low complexity-rich tracts occupy residues 85 to 100 (SSSN…SGAT) and 140 to 161 (SSSS…SASA). Residues 1434-1723 (EDPAFNNFWA…MANGGIRFVF (290 aa)) enclose the Autotransporter domain.

The protein belongs to the PMP outer membrane protein family.

The protein localises to the secreted. It is found in the cell wall. The protein resides in the cell outer membrane. The polypeptide is Probable outer membrane protein pmp20 (pmp20) (Chlamydia pneumoniae (Chlamydophila pneumoniae)).